Here is a 227-residue protein sequence, read N- to C-terminus: PKHD-type hydroxylase Mnod_1077 (227 aa).

The region spanning 78–178 (RVLPPLFNRY…RWSAFFWSQS (101 aa)) is the Fe2OG dioxygenase domain. Fe cation-binding residues include histidine 96, aspartate 98, and histidine 159. Arginine 169 serves as a coordination point for 2-oxoglutarate.

Fe(2+) is required as a cofactor. The cofactor is L-ascorbate.

This Methylobacterium nodulans (strain LMG 21967 / CNCM I-2342 / ORS 2060) protein is PKHD-type hydroxylase Mnod_1077.